A 473-amino-acid polypeptide reads, in one-letter code: Photosystem II CP43 reaction center protein (473 aa).

Positions 1–14 (MKTLYSPRRFYPVE) are excised as a propeptide. Thr-15 is subject to N-acetylthreonine. Thr-15 is modified (phosphothreonine). The next 5 helical transmembrane spans lie at 69 to 93 (LFEV…PHLA), 134 to 155 (LIGP…KDRN), 178 to 200 (KALF…RKIT), 255 to 275 (KPFA…LSYS), and 291 to 312 (WFNN…ASQA). Glu-367 contributes to the [CaMn4O5] cluster binding site. Residues 447–471 (RARAAAAGFEKGIDRDLEPVLFMTP) form a helical membrane-spanning segment.

The protein belongs to the PsbB/PsbC family. PsbC subfamily. In terms of assembly, PSII is composed of 1 copy each of membrane proteins PsbA, PsbB, PsbC, PsbD, PsbE, PsbF, PsbH, PsbI, PsbJ, PsbK, PsbL, PsbM, PsbT, PsbX, PsbY, PsbZ, Psb30/Ycf12, at least 3 peripheral proteins of the oxygen-evolving complex and a large number of cofactors. It forms dimeric complexes. Requires Binds multiple chlorophylls and provides some of the ligands for the Ca-4Mn-5O cluster of the oxygen-evolving complex. It may also provide a ligand for a Cl- that is required for oxygen evolution. PSII binds additional chlorophylls, carotenoids and specific lipids. as cofactor.

The protein localises to the plastid. It localises to the chloroplast thylakoid membrane. Functionally, one of the components of the core complex of photosystem II (PSII). It binds chlorophyll and helps catalyze the primary light-induced photochemical processes of PSII. PSII is a light-driven water:plastoquinone oxidoreductase, using light energy to abstract electrons from H(2)O, generating O(2) and a proton gradient subsequently used for ATP formation. The chain is Photosystem II CP43 reaction center protein from Gnetum parvifolium (Small-leaved jointfir).